A 349-amino-acid chain; its full sequence is uncharacterized protein (349 aa).

A signal peptide spans 1-29 (MKQKYENYFKKRLILNLLIFLLLACSSES).

This is an uncharacterized protein from Borreliella burgdorferi (strain ATCC 35210 / DSM 4680 / CIP 102532 / B31) (Borrelia burgdorferi).